Reading from the N-terminus, the 4011-residue chain is Hybrid PKS-NRPS synthetase mycA (4011 aa).

The Ketosynthase family 3 (KS3) domain maps to 12–451 (NEPIAIIGSA…GANAHVILEN (440 aa)). Catalysis depends on for beta-ketoacyl synthase activity residues cysteine 185, histidine 324, and histidine 373. Positions 576–903 (VFTGQGAQWA…PYTGTLSRGS (328 aa)) are acyl transferase (AT) domain. Positions 977 to 1113 (NPLLGRRIPD…GRVIVTLAGT (137 aa)) are N-terminal hotdog fold. The PKS/mFAS DH domain occupies 977-1290 (NPLLGRRIPD…ITPLATRTGQ (314 aa)). Residues 978–1287 (PLLGRRIPDG…GVRITPLATR (310 aa)) are dehydratase (DH) domain. The active-site Proton acceptor; for dehydratase activity is histidine 1009. The segment at 1135–1290 (TAEVREDEFY…ITPLATRTGQ (156 aa)) is C-terminal hotdog fold. Aspartate 1195 acts as the Proton donor; for dehydratase activity in catalysis. The methyltransferase (MT) domain stretch occupies residues 1434–1626 (YYVEALGIRE…FSGIDTITPE (193 aa)). Positions 2138–2311 (TYVLFGLTSD…AASVLHLGAV (174 aa)) are ketoreductase (KR)domain. The Carrier 1 domain occupies 2429–2504 (DSFLQKLQIM…DLVAFAHEKL (76 aa)). Serine 2464 bears the O-(pantetheine 4'-phosphoryl)serine mark. Positions 2519-2607 (AAAAAAAERS…PREQDVERTA (89 aa)) are disordered. The segment covering 2559–2578 (PASSSTGSDHPTSVTSSGHT) has biased composition (polar residues). The tract at residues 2604–2975 (ERTAPMSLGQ…KPDSTLGSAP (372 aa)) is condensation. Residues 3009–3414 (IIQRNPDTIA…GELEILGRID (406 aa)) are adenylation. Residues 3525–3544 (AKEEEEEKRPNGSSAAPLTQ) are disordered. A compositionally biased stretch (polar residues) spans 3535–3544 (NGSSAAPLTQ). In terms of domain architecture, Carrier 2 spans 3541 to 3621 (PLTQQELQLR…AMAAAVHDAA (81 aa)). At serine 3581 the chain carries O-(pantetheine 4'-phosphoryl)serine. The interval 3671–3978 (VVILTGATGF…RTVPLGQWIE (308 aa)) is reductase-like.

This sequence in the C-terminal section; belongs to the NRP synthetase family.

It catalyses the reaction L-leucine + 8 malonyl-CoA + 4 S-adenosyl-L-methionine + ATP + 9 NADPH + 12 H(+) = (5S)-5-(2-methylpropyl)-3-[(2E,6R,8E,10E,12E)-6,8,10,12-tetramethyltetradeca-2,8,10,12-tetraenoyl]-2,5-dihydro-1H-pyrrol-2-one + AMP + 4 S-adenosyl-L-homocysteine + 8 CO2 + diphosphate + 9 NADP(+) + 8 CoA + 7 H2O. Its pathway is mycotoxin biosynthesis. Hybrid PKS-NRPS synthetase; part of the gene cluster that mediates the biosynthesis of myceliothermophins, mycotoxins that contain a trans-fused decalin ring system connected to a conjugated 3-pyrrolin-2-one moiety and that have potential anti-tumor properties. The polyketide synthase module (PKS) of the PKS-NRPS mycA is responsible for the synthesis of the octaketide backbone. The downstream nonribosomal peptide synthetase (NRPS) module then amidates the carboxyl end of the octaketide with a leucine. A reductase-like domain (R) at the C-terminus catalyzes the reductive release of the polyketide-amino acid intermediate. Because mycA lacks a designated enoylreductase (ER) domain, the required activity is provided the enoyl reductase mycC. Following mycA-catalyzed construction and release of aminoacyl polyketide aldehyde, Knoevenagel condensation yields the expected ketone. This C18 keto acyclic precursor is the substrate of the Diels-Alderase mycB, that catalyzes the Diels-Alder cycloaddition to produce myceliothermophin E. A yet unknown oxygenase involved in the production of myceliothermophin A, via substitution with a hydroxyl group at the C21, has still to be identified. The protein is Hybrid PKS-NRPS synthetase mycA of Thermothelomyces thermophilus (strain ATCC 42464 / BCRC 31852 / DSM 1799) (Sporotrichum thermophile).